The sequence spans 390 residues: Putative 8-amino-7-oxononanoate synthase (390 aa).

A substrate-binding site is contributed by Arg19. 105–106 provides a ligand contact to pyridoxal 5'-phosphate; that stretch reads GY. His130 contacts substrate. Pyridoxal 5'-phosphate is bound by residues Ser177, 202–205, and 234–237; these read DEAH and TFSK. Lys237 is subject to N6-(pyridoxal phosphate)lysine. Thr351 serves as a coordination point for substrate.

The protein belongs to the class-II pyridoxal-phosphate-dependent aminotransferase family. BioF subfamily. As to quaternary structure, homodimer. Pyridoxal 5'-phosphate is required as a cofactor.

The enzyme catalyses 6-carboxyhexanoyl-[ACP] + L-alanine + H(+) = (8S)-8-amino-7-oxononanoate + holo-[ACP] + CO2. The protein operates within cofactor biosynthesis; biotin biosynthesis. Catalyzes the decarboxylative condensation of pimeloyl-[acyl-carrier protein] and L-alanine to produce 8-amino-7-oxononanoate (AON), [acyl-carrier protein], and carbon dioxide. In Geobacillus kaustophilus (strain HTA426), this protein is Putative 8-amino-7-oxononanoate synthase (bioF).